The chain runs to 171 residues: S-ribosylhomocysteine lyase (171 aa).

3 residues coordinate Fe cation: His54, His58, and Cys128.

It belongs to the LuxS family. As to quaternary structure, homodimer. The cofactor is Fe cation.

The catalysed reaction is S-(5-deoxy-D-ribos-5-yl)-L-homocysteine = (S)-4,5-dihydroxypentane-2,3-dione + L-homocysteine. Involved in the synthesis of autoinducer 2 (AI-2) which is secreted by bacteria and is used to communicate both the cell density and the metabolic potential of the environment. The regulation of gene expression in response to changes in cell density is called quorum sensing. Catalyzes the transformation of S-ribosylhomocysteine (RHC) to homocysteine (HC) and 4,5-dihydroxy-2,3-pentadione (DPD). The sequence is that of S-ribosylhomocysteine lyase from Escherichia coli (strain 55989 / EAEC).